A 603-amino-acid polypeptide reads, in one-letter code: Terpenoid synthase 25 (603 aa).

Aspartate 356, aspartate 360, asparagine 500, threonine 504, and glutamate 508 together coordinate Mg(2+). The DDXXD motif motif lies at 356–360 (DDTCD).

It belongs to the terpene synthase family. Tpsa subfamily. It depends on Mg(2+) as a cofactor. Mn(2+) is required as a cofactor. In terms of tissue distribution, predominantly expressed in roots but also in flowers.

It localises to the cytoplasm. Its pathway is secondary metabolite biosynthesis; terpenoid biosynthesis. Functionally, involved in terpene biosynthesis in roots. Possesses sesquiterpene (C15) synthase activity in vitro. Does not seem to be involved in diterpene (C20) biosynthesis. The protein is Terpenoid synthase 25 of Arabidopsis thaliana (Mouse-ear cress).